The following is a 267-amino-acid chain: Probable 6-oxopurine nucleoside phosphorylase (267 aa).

Phosphate-binding positions include S10, 50–51, and 83–84; these read RH and SA. M188 contributes to the substrate binding site. Phosphate is bound at residue T189. 212–214 lines the substrate pocket; sequence NYA.

Belongs to the PNP/MTAP phosphorylase family. MTAP subfamily. In terms of assembly, homohexamer. Dimer of a homotrimer.

The catalysed reaction is a purine D-ribonucleoside + phosphate = a purine nucleobase + alpha-D-ribose 1-phosphate. The enzyme catalyses guanosine + phosphate = alpha-D-ribose 1-phosphate + guanine. It catalyses the reaction inosine + phosphate = alpha-D-ribose 1-phosphate + hypoxanthine. The protein operates within purine metabolism; purine nucleoside salvage. In terms of biological role, purine nucleoside phosphorylase which is highly specific for 6-oxopurine nucleosides. Cleaves guanosine or inosine to respective bases and sugar-1-phosphate molecules. Involved in purine salvage. The chain is Probable 6-oxopurine nucleoside phosphorylase from Thermococcus kodakarensis (strain ATCC BAA-918 / JCM 12380 / KOD1) (Pyrococcus kodakaraensis (strain KOD1)).